Reading from the N-terminus, the 188-residue chain is Elongation factor P (188 aa).

This sequence belongs to the elongation factor P family.

The protein resides in the cytoplasm. It functions in the pathway protein biosynthesis; polypeptide chain elongation. In terms of biological role, involved in peptide bond synthesis. Stimulates efficient translation and peptide-bond synthesis on native or reconstituted 70S ribosomes in vitro. Probably functions indirectly by altering the affinity of the ribosome for aminoacyl-tRNA, thus increasing their reactivity as acceptors for peptidyl transferase. This chain is Elongation factor P, found in Chlorobium phaeobacteroides (strain DSM 266 / SMG 266 / 2430).